A 1194-amino-acid chain; its full sequence is Metabotropic glutamate receptor 1 (1194 aa).

The N-terminal stretch at 1–18 is a signal peptide; that stretch reads MVGLLLFFFPAIFLEVSL. The Extracellular portion of the chain corresponds to 19 to 592; sequence LPRSPGRKVL…VRYLEWSNIE (574 aa). A disulfide bond links Cys-67 and Cys-109. An L-glutamate-binding site is contributed by Tyr-74. A glycan (N-linked (GlcNAc...) asparagine) is linked at Asn-98. L-glutamate contacts are provided by residues Ser-165 and 186–188; that span reads SAT. Residue Asn-223 is glycosylated (N-linked (GlcNAc...) asparagine). An L-glutamate-binding site is contributed by Tyr-236. Residues Cys-289 and Cys-291 are joined by a disulfide bond. Residue Asp-318 coordinates L-glutamate. Cys-378 and Cys-394 are disulfide-bonded. N-linked (GlcNAc...) asparagine glycosylation occurs at Asn-397. Lys-409 serves as a coordination point for L-glutamate. Cys-432 and Cys-439 are joined by a disulfide. A glycan (N-linked (GlcNAc...) asparagine) is linked at Asn-515. A helical transmembrane segment spans residues 593–615; sequence SIIAIAFSCLGILVTLFVTLIFV. The Cytoplasmic segment spans residues 616-629; that stretch reads LYRDTPVVKSSSRE. The helical transmembrane segment at 630 to 650 threads the bilayer; the sequence is LCYIILAGIFLGYVCPFTLIA. The Extracellular portion of the chain corresponds to 651–658; that stretch reads KPTTTSCY. Residues Cys-657 and Cys-746 are joined by a disulfide bond. A helical membrane pass occupies residues 659-680; sequence LQRLLVGLSSAMCYSALVTKTN. Residues 681-703 lie on the Cytoplasmic side of the membrane; that stretch reads RIARILAGSKKKICTRKPRFMSA. The chain crosses the membrane as a helical span at residues 704–727; it reads WAQVIIASILISVQLTLVVTLIIM. Residues 728–750 are Extracellular-facing; it reads EPPMPILSYPSIKEVYLICNTSN. The helical transmembrane segment at 751–772 threads the bilayer; it reads LGVVAPLGYNGLLIMSCTYYAF. The Cytoplasmic segment spans residues 773–785; it reads KTRNVPANFNEAK. The helical transmembrane segment at 786 to 807 threads the bilayer; that stretch reads YIAFTMYTTCIIWLAFVPIYFG. Topologically, residues 808-815 are extracellular; sequence SNYKIITT. A helical membrane pass occupies residues 816–840; the sequence is CFAVSLSVTVALGCMFTPKMYIIIA. The Cytoplasmic segment spans residues 841 to 1194; that stretch reads KPERNVRSAF…RDYKQSSSTL (354 aa). The residue at position 853 (Ser-853) is a Phosphoserine. Thr-871 carries the phosphothreonine modification. The disordered stretch occupies residues 883 to 905; that stretch reads AGNANSNGKSVSWSEPGGGQVPK. Positions 885 to 895 are enriched in polar residues; sequence NANSNGKSVSW. A phosphoserine mark is found at Ser-894 and Ser-969. Positions 1007-1030 are disordered; sequence PALPKGLPPPLQQQQQPPPQQKSL. A compositionally biased stretch (pro residues) spans 1012 to 1026; sequence GLPPPLQQQQQPPPQ. Ser-1091 bears the Phosphoserine mark. The segment at 1113 to 1173 is disordered; the sequence is HEREGNTEED…SPVSESVLCT (61 aa). Positions 1119–1131 are enriched in acidic residues; it reads TEEDELEEEEEDL. Phosphoserine is present on Ser-1142. Thr-1146 is subject to Phosphothreonine. Ser-1149 carries the phosphoserine modification. The segment covering 1154-1170 has biased composition (low complexity); it reads SVASGSSVPSSPVSESV.

This sequence belongs to the G-protein coupled receptor 3 family. In terms of assembly, homodimer; disulfide-linked. The PPXXF motif binds HOMER1, HOMER2 and HOMER3. Interacts with TAMALIN. Interacts with RYR1, RYR2, ITPR1, SHANK1 and SHANK3. Interacts with SIAH1. Detected in brain.

It is found in the cell membrane. The protein localises to the postsynaptic cell membrane. It localises to the cell projection. Its subcellular location is the dendrite. Its activity is regulated as follows. Signaling is inhibited by the antagonist LY341495. The LY341495 binding site partially overlaps with the glutamate binding site. Signaling is also inhibited by synthetic allosteric regulators, such as FITM (4-fluoro-N-(4-(6-(isopropylamino)pyrimidin-4-yl)thiazol-2-yl)-N-methylbenzamide) that bind in a pocket between the transmembrane helices. Functionally, G-protein coupled receptor for glutamate. Ligand binding causes a conformation change that triggers signaling via guanine nucleotide-binding proteins (G proteins) and modulates the activity of down-stream effectors. Signaling activates a phosphatidylinositol-calcium second messenger system. May participate in the central action of glutamate in the CNS, such as long-term potentiation in the hippocampus and long-term depression in the cerebellum. May function in the light response in the retina. Induces GRID1 and GRID2 cation-channel activation via GNAQ-PLC-PKC pathway in dopaminergic neurons and cerebellar Purkinje cell, respectively. This Homo sapiens (Human) protein is Metabotropic glutamate receptor 1 (GRM1).